Consider the following 768-residue polypeptide: Integrin beta-8 (768 aa).

A signal peptide spans Met-1–Ser-42. Topologically, residues Glu-43–Arg-683 are extracellular. The PSI domain maps to Arg-46–Pro-95. Cystine bridges form between Cys-47/Cys-65, Cys-55/Cys-469, Cys-58/Cys-83, Cys-68/Cys-94, Cys-211/Cys-218, Cys-266/Cys-307, Cys-407/Cys-419, Cys-439/Cys-467, Cys-471/Cys-491, Cys-471/Cys-494, Cys-481/Cys-494, Cys-499/Cys-528, Cys-511/Cys-526, Cys-520/Cys-531, Cys-533/Cys-546, Cys-553/Cys-567, Cys-561/Cys-572, Cys-574/Cys-583, Cys-585/Cys-609, Cys-593/Cys-607, Cys-601/Cys-612, Cys-614/Cys-624, Cys-627/Cys-630, Cys-634/Cys-661, and Cys-640/Cys-657. In terms of domain architecture, VWFA spans Pro-146 to Leu-384. Asp-154 and Ser-156 together coordinate Mg(2+). Ca(2+) is bound at residue Asp-193. Asn-233 is a glycosylation site (N-linked (GlcNAc...) asparagine). Residues Asn-249, Asp-251, Pro-253, and Glu-254 each contribute to the Ca(2+) site. Glu-254 is a binding site for Mg(2+). N-linked (GlcNAc...) asparagine glycosylation occurs at Asn-402. 3 N-linked (GlcNAc...) asparagine glycosylation sites follow: Asn-421, Asn-431, and Asn-456. I-EGF domains follow at residues Cys-471–Gln-495, Cys-499–Glu-547, Lys-548–Gln-584, and Cys-585–Glu-625. The N-linked (GlcNAc...) asparagine glycan is linked to Asn-648. The chain crosses the membrane as a helical span at residues Ile-684–Ile-703. Topologically, residues Arg-704 to Phe-768 are cytoplasmic.

The protein belongs to the integrin beta chain family. As to quaternary structure, heterodimer of an alpha and a beta subunit. Beta-8 (ITGB8) associates with alpha-V (ITGAV) to form ITGAV:ITGB8. ITGAV:ITGB8 interacts with TGFB1. In terms of tissue distribution, placenta, kidney, brain, ovary, uterus and in several transformed cells.

The protein resides in the cell membrane. Its function is as follows. Integrin alpha-V:beta-8 (ITGAV:ITGB8) is a receptor for fibronectin. It recognizes the sequence R-G-D in its ligands. Integrin alpha-V:beta-6 (ITGAV:ITGB6) mediates R-G-D-dependent release of transforming growth factor beta-1 (TGF-beta-1) from regulatory Latency-associated peptide (LAP), thereby playing a key role in TGF-beta-1 activation on the surface of activated regulatory T-cells (Tregs). Required during vasculogenesis. This is Integrin beta-8 (ITGB8) from Oryctolagus cuniculus (Rabbit).